The sequence spans 468 residues: MSVSSRGAASPAHRTAPTKWLFTKEEMKKTASIQEGMSREEELASRQMAAAFIQEMIDGLNNVKDPKMKIGHTGLCVAHTHMHRFYYLHSFKKYDYRDVGAACVFLAGKSQECPRKLSHVISVWRERKDRKQLTTETARNEAAQIIVLLESMILQTIAFDLNVHLPHIYVLDIMKKVDKKEHYRPLTSCAYYFATDVIAVTDWSLRYSAASMSIVIIHLMAAYANVRIERLFADFINEDSPWYAKFDETMTNEKLREMEVDFLVTYRNSCQFHHASKFNFREHRPMLENPDVRKLDRTRDARSHSPMVHHVPDSTVNVRPRAYVPRDELTVERLNKERGVEEERRKRERDRMAGKLDSSTSSEKRARIDPLANNFVSSSSSSNGKLAPPPIPPQLNFPPPPIVSSGYNHKNQINRKNHENNHTNSSVSPAFVPSARTFDVAPMLTPPTAPKLQSADNSDMDLEDGELE.

The segment covering 336–354 (KERGVEEERRKRERDRMAG) has biased composition (basic and acidic residues). Residues 336-468 (KERGVEEERR…DMDLEDGELE (133 aa)) form a disordered region. The span at 387–402 (APPPIPPQLNFPPPPI) shows a compositional bias: pro residues. The span at 458–468 (SDMDLEDGELE) shows a compositional bias: acidic residues.

This sequence belongs to the cyclin family. Cyclin C subfamily.

Regulatory subunit of the cyclin-dependent kinase pair (CDK9/cyclin T) complex, also called positive transcription elongation factor B (P-TEFb), which is proposed to facilitate the transition from abortive to production elongation by phosphorylating the CTD (carboxy-terminal domain) of the large subunit of RNA polymerase II (RNAP II). The chain is Cyclin-T1.1 from Caenorhabditis elegans.